The chain runs to 363 residues: Trans-2,3-enoyl-CoA reductase-like (363 aa).

At S37 the chain carries Phosphoserine. A run of 3 helical transmembrane segments spans residues 143 to 163 (WTTV…LFYL), 217 to 237 (LIMS…YINH), and 311 to 331 (ISFT…LMSI).

The protein belongs to the steroid 5-alpha reductase family. In terms of tissue distribution, predominantly expressed in the heart and skeletal muscle.

The protein resides in the membrane. It localises to the endoplasmic reticulum. The chain is Trans-2,3-enoyl-CoA reductase-like (TECRL) from Homo sapiens (Human).